The following is a 73-amino-acid chain: MKFLFLTLVLLYFTAILVFIVFPSYAQIQTNASCTTSTHCVEPCRKRCLLIHKCINDKCTCYPRINICEKKNN.

An N-terminal signal peptide occupies residues 1–26 (MKFLFLTLVLLYFTAILVFIVFPSYA).

It belongs to the short scorpion toxin superfamily. Potassium channel inhibitor family. Alpha-KTx 27 subfamily. Contains 4 disulfide bonds. In terms of tissue distribution, expressed by the venom gland.

Its subcellular location is the secreted. The protein is Potassium channel toxin alpha-KTx 27.4 of Mesobuthus gibbosus (Mediterranean checkered scorpion).